A 467-amino-acid chain; its full sequence is tRNA-2-methylthio-N(6)-dimethylallyladenosine synthase (467 aa).

An MTTase N-terminal domain is found at 4–124 (RKLFIKSYGC…LPEMVAKVER (121 aa)). Cysteine 13, cysteine 49, cysteine 87, cysteine 161, cysteine 165, and cysteine 168 together coordinate [4Fe-4S] cluster. The region spanning 147–379 (QAHGPSAFLS…QARLVEIQQA (233 aa)) is the Radical SAM core domain. Residues 382 to 444 (QACVGRPMDV…SNSLAARLVE (63 aa)) enclose the TRAM domain.

It belongs to the methylthiotransferase family. MiaB subfamily. Monomer. Requires [4Fe-4S] cluster as cofactor.

The protein resides in the cytoplasm. It catalyses the reaction N(6)-dimethylallyladenosine(37) in tRNA + (sulfur carrier)-SH + AH2 + 2 S-adenosyl-L-methionine = 2-methylsulfanyl-N(6)-dimethylallyladenosine(37) in tRNA + (sulfur carrier)-H + 5'-deoxyadenosine + L-methionine + A + S-adenosyl-L-homocysteine + 2 H(+). In terms of biological role, catalyzes the methylthiolation of N6-(dimethylallyl)adenosine (i(6)A), leading to the formation of 2-methylthio-N6-(dimethylallyl)adenosine (ms(2)i(6)A) at position 37 in tRNAs that read codons beginning with uridine. The polypeptide is tRNA-2-methylthio-N(6)-dimethylallyladenosine synthase (Rhodospirillum rubrum (strain ATCC 11170 / ATH 1.1.1 / DSM 467 / LMG 4362 / NCIMB 8255 / S1)).